The following is a 207-amino-acid chain: MWAFGGRAAVGLLPRTASRASAWVGNPRWREPIVTCGRRGLHVTVNAGATRHAHLNLHYLQILNIKKQSVCVVHLRNLGTLDNPSSLDETAYERLAEETLDSLAEFFEDLADKPYTLEDYDVSFGDGVLTIKLGGDLGTYVINKQTPNKQIWLSSPSSGPKRYDWTGKNWVYSHDGVSLHELLARELTKALNTKLDLSSLAYSGKGT.

The transit peptide at 1 to 40 (MWAFGGRAAVGLLPRTASRASAWVGNPRWREPIVTCGRRG) directs the protein to the mitochondrion.

The protein belongs to the frataxin family. As to quaternary structure, component of the mitochondrial core iron-sulfur cluster (ISC) complex composed of NFS1, LYRM4, NDUFAB1, ISCU, FXN, and FDX2; this complex is a heterohexamer containing two copies of each monomer. Homodimer. Monomer (probable predominant form). Oligomer. Monomers and polymeric aggregates of &gt;1 MDa have been isolated from mitochondria. A small fraction of heterologous overexpressed recombinant frataxin forms high-molecular weight aggregates that incorporate iron. Interacts with LYRM4. Interacts (via ferrous form) with ISCU; the interaction is possible when both are bound to the dimeric form of the cysteine desulfurase complex (NFS1:LYRM4) and the interaction enhances FXN interaction to the dimeric form of the cysteine desulfurase complex (NFS1:LYRM4). Interacts with FECH; one iron-bound FXN monomer seems to interact with a FECH homodimer. Interacts with SDHA and SDHB. Interacts with ACO2; the interaction is dependent on citrate. Interacts with HSPA9. Component of a complex composed of FXN, NFS1, LYRM4 and ISCU. In terms of assembly, interacts with ACO1. Interacts with ISCU (cytoplasmic form). Post-translationally, processed in two steps by mitochondrial processing peptidase (MPP). MPP first cleaves the precursor to intermediate form and subsequently converts the intermediate to yield frataxin mature form (frataxin(81-210)) which is the predominant form. The additional forms, frataxin(56-210) and frataxin(78-210), seem to be produced when the normal maturation process is impaired; their physiological relevance is unsure. In terms of tissue distribution, heart, liver, skeletal muscle, kidney, spleen and thymus. Weakly expressed in the brain and lung.

The protein resides in the mitochondrion. Its subcellular location is the cytoplasm. It is found in the cytosol. It carries out the reaction 4 Fe(2+) + O2 + 4 H(+) = 4 Fe(3+) + 2 H2O. Its function is as follows. Functions as an activator of persulfide transfer to the scaffoding protein ISCU as component of the core iron-sulfur cluster (ISC) assembly complex and participates to the [2Fe-2S] cluster assembly. Accelerates sulfur transfer from NFS1 persulfide intermediate to ISCU and to small thiols such as L-cysteine and glutathione leading to persulfuration of these thiols and ultimately sulfide release. Binds ferrous ion and is released from FXN upon the addition of both L-cysteine and reduced FDX2 during [2Fe-2S] cluster assembly. The core iron-sulfur cluster (ISC) assembly complex is involved in the de novo synthesis of a [2Fe-2S] cluster, the first step of the mitochondrial iron-sulfur protein biogenesis. This process is initiated by the cysteine desulfurase complex (NFS1:LYRM4:NDUFAB1) that produces persulfide which is delivered on the scaffold protein ISCU in a FXN-dependent manner. Then this complex is stabilized by FDX2 which provides reducing equivalents to accomplish the [2Fe-2S] cluster assembly. Finally, the [2Fe-2S] cluster is transferred from ISCU to chaperone proteins, including HSCB, HSPA9 and GLRX5. May play a role in the protection against iron-catalyzed oxidative stress through its ability to catalyze the oxidation of Fe(2+) to Fe(3+); the oligomeric form but not the monomeric form has in vitro ferroxidase activity. May be able to store large amounts of iron in the form of a ferrihydrite mineral by oligomerization; however, the physiological relevance is unsure as reports are conflicting and the function has only been shown using heterologous overexpression systems. May function as an iron chaperone protein that protects the aconitase [4Fe-4S]2+ cluster from disassembly and promotes enzyme reactivation. May play a role as a high affinity iron binding partner for FECH that is capable of both delivering iron to ferrochelatase and mediating the terminal step in mitochondrial heme biosynthesis. Modulates the RNA-binding activity of ACO1. May be involved in the cytoplasmic iron-sulfur protein biogenesis. May contribute to oxidative stress resistance and overall cell survival. This chain is Frataxin, mitochondrial, found in Mus musculus (Mouse).